The sequence spans 251 residues: Small ribosomal subunit protein uS2 (251 aa).

The protein belongs to the universal ribosomal protein uS2 family.

The protein is Small ribosomal subunit protein uS2 of Nitrosomonas eutropha (strain DSM 101675 / C91 / Nm57).